We begin with the raw amino-acid sequence, 500 residues long: Chromosomal replication initiator protein DnaA (500 aa).

Residues 1–81 (MVNASGDPVI…LQALRTVTGE (81 aa)) are domain I, interacts with DnaA modulators. The domain II stretch occupies residues 81–155 (ENMFPAFKVV…QQKMNRDPET (75 aa)). The segment at 156-377 (HLNKNFTFDS…GALTRVTAVA (222 aa)) is domain III, AAA+ region. ATP is bound by residues Gly200, Gly202, Lys203, and Thr204. Residues 378–500 (SLSNQPVTRA…TVRLKQSNTN (123 aa)) are domain IV, binds dsDNA.

Belongs to the DnaA family. Oligomerizes as a right-handed, spiral filament on DNA at oriC.

It is found in the cytoplasm. Plays an essential role in the initiation and regulation of chromosomal replication. ATP-DnaA binds to the origin of replication (oriC) to initiate formation of the DNA replication initiation complex once per cell cycle. Binds the DnaA box (a 9 base pair repeat at the origin) and separates the double-stranded (ds)DNA. Forms a right-handed helical filament on oriC DNA; dsDNA binds to the exterior of the filament while single-stranded (ss)DNA is stabiized in the filament's interior. The ATP-DnaA-oriC complex binds and stabilizes one strand of the AT-rich DNA unwinding element (DUE), permitting loading of DNA polymerase. After initiation quickly degrades to an ADP-DnaA complex that is not apt for DNA replication. Binds acidic phospholipids. The chain is Chromosomal replication initiator protein DnaA from Bifidobacterium longum (strain DJO10A).